The primary structure comprises 180 residues: Stathmin-3 (180 aa).

Residues 38-180 form the SLD domain; that stretch reads GDMEVKQLDK…NKEQREEISG (143 aa). Residues 60 to 74 are compositionally biased toward low complexity; the sequence is SPSDLSPESPILSSP. Residues 60-82 form a disordered region; that stretch reads SPSDLSPESPILSSPPKKKDLSL. The stretch at 75 to 179 forms a coiled coil; it reads PKKKDLSLEE…RNKEQREEIS (105 aa).

The protein belongs to the stathmin family.

This chain is Stathmin-3 (STMN3), found in Gallus gallus (Chicken).